The primary structure comprises 397 residues: Lysophospholipid transporter LplT (397 aa).

At 1 to 17 (MSESVHTNTSLWSKGMK) the chain is on the periplasmic side. The chain crosses the membrane as a helical span at residues 18–38 (AVIVAQFLSAFGDNALLFATL). At 39-52 (ALLNAQFYPEWSQP) the chain is on the cytoplasmic side. A helical membrane pass occupies residues 53-73 (ILQMVFVGAYILFAPFVGQVA). Residues 74 to 90 (DSFAKGRVMMFANGLKL) are Periplasmic-facing. A helical membrane pass occupies residues 91-111 (LGAASICFGINPFLGYTLVGV). The Cytoplasmic segment spans residues 112 to 144 (GAAAYSPAKYGILGELTTGSKLVKANGLMEAST). Residues 145–165 (IAAILLGSVAGGVLADWHVLV) traverse the membrane as a helical segment. Residue alanine 166 is a topological domain, periplasmic. A helical transmembrane segment spans residues 167–187 (LAACALAYGGAVVANIYIPKL). Residues 188–226 (AAARPGQSWNLINMTRSFLNACTSLWRNGETRFSLVGTS) are Cytoplasmic-facing. Residues 227-247 (LFWGAGVTLRFLLVLWVPVAL) form a helical membrane-spanning segment. Over 248-256 (GITDNATPT) the chain is Periplasmic. A helical transmembrane segment spans residues 257–277 (YLNAMVAIGIVVGAGAAAKLV). Residues 278–280 (TLE) lie on the Cytoplasmic side of the membrane. Residues 281 to 301 (TVSRCMPAGILIGVVVLIFSL) form a helical membrane-spanning segment. Residues 302 to 304 (QHE) are Periplasmic-facing. The helical transmembrane segment at 305-325 (LLPAYALLMLIGVMGGFFVVP) threads the bilayer. The Cytoplasmic portion of the chain corresponds to 326–343 (LNALLQERGKKSVGAGNA). A helical membrane pass occupies residues 344–364 (IAVQNLGENSAMLLMLGIYSL). Residues 365 to 366 (AV) lie on the Periplasmic side of the membrane. Residues 367-387 (MIGIPVVPIGIGFGALFALAI) form a helical membrane-spanning segment. The Cytoplasmic segment spans residues 388–397 (TALWIWQRRH).

The protein belongs to the major facilitator superfamily. LplT (TC 2.A.1.42) family.

The protein resides in the cell inner membrane. In terms of biological role, catalyzes the facilitated diffusion of 2-acyl-glycero-3-phosphoethanolamine (2-acyl-GPE) into the cell. The chain is Lysophospholipid transporter LplT from Escherichia coli (strain SE11).